Reading from the N-terminus, the 637-residue chain is Biosynthetic arginine decarboxylase (637 aa).

At K110 the chain carries N6-(pyridoxal phosphate)lysine. Position 290 to 300 (I290 to Y300) interacts with substrate.

It belongs to the Orn/Lys/Arg decarboxylase class-II family. SpeA subfamily. The cofactor is Mg(2+). It depends on pyridoxal 5'-phosphate as a cofactor.

It catalyses the reaction L-arginine + H(+) = agmatine + CO2. In terms of biological role, catalyzes the biosynthesis of agmatine from arginine. This Pseudomonas putida (strain ATCC 47054 / DSM 6125 / CFBP 8728 / NCIMB 11950 / KT2440) protein is Biosynthetic arginine decarboxylase.